Reading from the N-terminus, the 1198-residue chain is Regulator of G-protein signaling 3 (1198 aa).

Positions G137–Y256 constitute a C2 domain. Positions K299–V376 constitute a PDZ domain. Residue R448 is modified to Omega-N-methylarginine. Positions Q669–V933 are disordered. The residue at position 674 (S674) is a Phosphoserine. The span at K679–K697 shows a compositional bias: basic and acidic residues. Polar residues predominate over residues E739–G751. The span at P753–A773 shows a compositional bias: pro residues. A compositionally biased stretch (acidic residues) spans G877–N906. Over residues Y907–S917 the composition is skewed to basic and acidic residues. 4 positions are modified to phosphoserine: S943, S946, S978, and S1007. Disordered regions lie at residues S1007 to N1026 and K1032 to M1056. Residues S1073–L1198 form the RGS domain.

Binds EFNB1 and EFNB2. Binds the GNB1-GNG2 heterodimer. Post-translationally, phosphorylated by cyclic GMP-dependent protein kinase. In terms of processing, ISGylated.

It localises to the cytoplasm. It is found in the nucleus. Its subcellular location is the cell membrane. Its function is as follows. Down-regulates signaling from heterotrimeric G-proteins by increasing the GTPase activity of the alpha subunits, thereby driving them into their inactive GDP-bound form. Down-regulates G-protein-mediated release of inositol phosphates and activation of MAP kinases. The sequence is that of Regulator of G-protein signaling 3 (RGS3) from Homo sapiens (Human).